A 324-amino-acid polypeptide reads, in one-letter code: Glucokinase (324 aa).

6 to 11 (IDIGGT) provides a ligand contact to ATP.

This sequence belongs to the bacterial glucokinase family.

It is found in the cytoplasm. It carries out the reaction D-glucose + ATP = D-glucose 6-phosphate + ADP + H(+). This chain is Glucokinase, found in Zymomonas mobilis subsp. mobilis (strain ATCC 31821 / ZM4 / CP4).